The sequence spans 225 residues: ATP-dependent Clp protease proteolytic subunit (225 aa).

Catalysis depends on serine 123, which acts as the Nucleophile. Histidine 148 is a catalytic residue.

This sequence belongs to the peptidase S14 family. Fourteen ClpP subunits assemble into 2 heptameric rings which stack back to back to give a disk-like structure with a central cavity, resembling the structure of eukaryotic proteasomes.

It localises to the cytoplasm. The enzyme catalyses Hydrolysis of proteins to small peptides in the presence of ATP and magnesium. alpha-casein is the usual test substrate. In the absence of ATP, only oligopeptides shorter than five residues are hydrolyzed (such as succinyl-Leu-Tyr-|-NHMec, and Leu-Tyr-Leu-|-Tyr-Trp, in which cleavage of the -Tyr-|-Leu- and -Tyr-|-Trp bonds also occurs).. In terms of biological role, cleaves peptides in various proteins in a process that requires ATP hydrolysis. Has a chymotrypsin-like activity. Plays a major role in the degradation of misfolded proteins. The protein is ATP-dependent Clp protease proteolytic subunit of Chlorobium phaeovibrioides (strain DSM 265 / 1930) (Prosthecochloris vibrioformis (strain DSM 265)).